The following is a 278-amino-acid chain: Truncated FRIGIDA-like protein 1 (278 aa).

Residues 1–36 adopt a coiled-coil conformation; sequence MTASETIATAINQIDEKKEKLKKAFDDLQAHRSLLS.

The protein belongs to the Frigida family.

In terms of biological role, truncated inactive FRIGIDA-like 1 protein. This chain is Truncated FRIGIDA-like protein 1 (FRL1), found in Arabidopsis thaliana (Mouse-ear cress).